A 648-amino-acid chain; its full sequence is tRNA 5-methylaminomethyl-2-thiouridine biosynthesis bifunctional protein MnmC (648 aa).

The interval 1–228 (MTDRLVPASL…VDDLLVGEYA (228 aa)) is tRNA (mnm(5)s(2)U34)-methyltransferase. Residues 252–648 (IGAGLAGCAV…LRARRVGRAG (397 aa)) are FAD-dependent cmnm(5)s(2)U34 oxidoreductase.

This sequence in the N-terminal section; belongs to the methyltransferase superfamily. tRNA (mnm(5)s(2)U34)-methyltransferase family. The protein in the C-terminal section; belongs to the DAO family. Requires FAD as cofactor.

It localises to the cytoplasm. It carries out the reaction 5-aminomethyl-2-thiouridine(34) in tRNA + S-adenosyl-L-methionine = 5-methylaminomethyl-2-thiouridine(34) in tRNA + S-adenosyl-L-homocysteine + H(+). Its function is as follows. Catalyzes the last two steps in the biosynthesis of 5-methylaminomethyl-2-thiouridine (mnm(5)s(2)U) at the wobble position (U34) in tRNA. Catalyzes the FAD-dependent demodification of cmnm(5)s(2)U34 to nm(5)s(2)U34, followed by the transfer of a methyl group from S-adenosyl-L-methionine to nm(5)s(2)U34, to form mnm(5)s(2)U34. The protein is tRNA 5-methylaminomethyl-2-thiouridine biosynthesis bifunctional protein MnmC of Burkholderia lata (strain ATCC 17760 / DSM 23089 / LMG 22485 / NCIMB 9086 / R18194 / 383).